We begin with the raw amino-acid sequence, 232 residues long: Large ribosomal subunit protein uL1 (232 aa).

Belongs to the universal ribosomal protein uL1 family. As to quaternary structure, part of the 50S ribosomal subunit.

Its function is as follows. Binds directly to 23S rRNA. The L1 stalk is quite mobile in the ribosome, and is involved in E site tRNA release. Protein L1 is also a translational repressor protein, it controls the translation of the L11 operon by binding to its mRNA. This is Large ribosomal subunit protein uL1 from Burkholderia ambifaria (strain MC40-6).